The sequence spans 872 residues: DNA mismatch repair protein MutS (872 aa).

602 to 609 (GPNMSGKS) serves as a coordination point for ATP.

The protein belongs to the DNA mismatch repair MutS family.

Functionally, this protein is involved in the repair of mismatches in DNA. It is possible that it carries out the mismatch recognition step. This protein has a weak ATPase activity. This is DNA mismatch repair protein MutS from Staphylococcus aureus (strain MRSA252).